Reading from the N-terminus, the 147-residue chain is Basic phospholipase A2 beta-bungarotoxin A1 chain (147 aa).

Positions Met-1–Ala-19 are cleaved as a signal peptide. The propeptide occupies Ala-20–Leu-27. Intrachain disulfides connect Cys-54/Cys-146, Cys-56/Cys-72, Cys-71/Cys-127, Cys-78/Cys-120, Cys-88/Cys-113, and Cys-106/Cys-118. Tyr-55, Gly-57, and Gly-59 together coordinate Ca(2+). The active site involves His-75. Asp-76 serves as a coordination point for Ca(2+). Asp-121 is a catalytic residue.

The protein belongs to the phospholipase A2 family. Group I subfamily. D49 sub-subfamily. In terms of assembly, heterodimer; disulfide-linked. The A chains have phospholipase A2 activity and the B chains show homology with the basic protease inhibitors. Requires Ca(2+) as cofactor. Expressed by the venom gland.

The protein localises to the secreted. It carries out the reaction a 1,2-diacyl-sn-glycero-3-phosphocholine + H2O = a 1-acyl-sn-glycero-3-phosphocholine + a fatty acid + H(+). Its function is as follows. Snake venom phospholipase A2 (PLA2) that inhibits neuromuscular transmission by blocking acetylcholine release from the nerve termini. PLA2 catalyzes the calcium-dependent hydrolysis of the 2-acyl groups in 3-sn-phosphoglycerides. The sequence is that of Basic phospholipase A2 beta-bungarotoxin A1 chain from Bungarus caeruleus (Indian krait).